The primary structure comprises 150 residues: Large ribosomal subunit protein bL9 (150 aa).

The protein belongs to the bacterial ribosomal protein bL9 family.

In terms of biological role, binds to the 23S rRNA. This Neisseria meningitidis serogroup B (strain ATCC BAA-335 / MC58) protein is Large ribosomal subunit protein bL9.